A 402-amino-acid polypeptide reads, in one-letter code: NADH dehydrogenase [ubiquinone] 1 alpha subcomplex subunit 9, mitochondrial (402 aa).

The transit peptide at 1-43 (MQVVSRRLVQRPLVGGASIYSSSSLRSLYGVSNHLNGTDNCRY) directs the protein to the mitochondrion.

It belongs to the complex I NDUFA9 subunit family. Complex I is composed of at least 49 different subunits. This a component of the hydrophobic protein fraction. It depends on FAD as a cofactor.

It is found in the mitochondrion matrix. Accessory subunit of the mitochondrial membrane respiratory chain NADH dehydrogenase (Complex I), that is believed not to be involved in catalysis. Complex I functions in the transfer of electrons from NADH to the respiratory chain. The immediate electron acceptor for the enzyme is believed to be ubiquinone. In Arabidopsis thaliana (Mouse-ear cress), this protein is NADH dehydrogenase [ubiquinone] 1 alpha subcomplex subunit 9, mitochondrial.